We begin with the raw amino-acid sequence, 79 residues long: Putative antitoxin VapB12 (79 aa).

Belongs to the UPF0330 family.

Functionally, possibly the antitoxin component of a type II toxin-antitoxin (TA) system. Its cognate toxin is VapC12 (Potential). The protein is Putative antitoxin VapB12 (vapB12) of Sulfurisphaera tokodaii (strain DSM 16993 / JCM 10545 / NBRC 100140 / 7) (Sulfolobus tokodaii).